The chain runs to 132 residues: Small ribosomal subunit protein uS8 (132 aa).

This sequence belongs to the universal ribosomal protein uS8 family. In terms of assembly, part of the 30S ribosomal subunit. Contacts proteins S5 and S12.

Functionally, one of the primary rRNA binding proteins, it binds directly to 16S rRNA central domain where it helps coordinate assembly of the platform of the 30S subunit. This is Small ribosomal subunit protein uS8 from Coprothermobacter proteolyticus (strain ATCC 35245 / DSM 5265 / OCM 4 / BT).